The following is a 256-amino-acid chain: Major prion protein (256 aa).

Positions 1–24 are cleaved as a signal peptide; it reads MVKSHIGSWILVLFVAMWSDVGLC. Residues 25 to 233 are interaction with GRB2, ERI3 and SYN1; the sequence is KKRPKPGGGW…ESEAYYQRGA (209 aa). The segment at 28-110 is disordered; sequence PKPGGGWNTG…QWNKPSKPKT (83 aa). A run of 5 repeats spans residues 54–62, 63–70, 71–78, 79–86, and 87–95. The 5 X 8 AA tandem repeats of P-H-G-G-G-W-G-Q stretch occupies residues 54 to 95; sequence PQGGGGWGQPHGGGWGQPHGGGWGQPHGGGWGQPHGGGGWGQ. Residues 55–97 show a composition bias toward gly residues; that stretch reads QGGGGWGQPHGGGWGQPHGGGWGQPHGGGWGQPHGGGGWGQGG. 12 residues coordinate Cu(2+): His-64, Gly-65, Gly-66, His-72, Gly-73, Gly-74, His-80, Gly-81, Gly-82, His-88, Gly-90, and Gly-91. Cys-182 and Cys-217 are disulfide-bonded. Residues Asn-184 and Asn-200 are each glycosylated (N-linked (GlcNAc...) asparagine). Ala-233 carries GPI-anchor amidated alanine lipidation. A propeptide spans 234 to 256 (removed in mature form); it reads SVILFSSPPVILLISFLIFLIVG.

Belongs to the prion family. In terms of assembly, monomer and homodimer. Has a tendency to aggregate into amyloid fibrils containing a cross-beta spine, formed by a steric zipper of superposed beta-strands. Soluble oligomers may represent an intermediate stage on the path to fibril formation. Copper binding may promote oligomerization. Interacts with GRB2, APP, ERI3/PRNPIP and SYN1. Mislocalized cytosolically exposed PrP interacts with MGRN1; this interaction alters MGRN1 subcellular location and causes lysosomal enlargement. Interacts with KIAA1191.

It is found in the cell membrane. The protein localises to the golgi apparatus. Its function is as follows. Its primary physiological function is unclear. Has cytoprotective activity against internal or environmental stresses. May play a role in neuronal development and synaptic plasticity. May be required for neuronal myelin sheath maintenance. May play a role in iron uptake and iron homeostasis. Soluble oligomers are toxic to cultured neuroblastoma cells and induce apoptosis (in vitro). Association with GPC1 (via its heparan sulfate chains) targets PRNP to lipid rafts. Also provides Cu(2+) or Zn(2+) for the ascorbate-mediated GPC1 deaminase degradation of its heparan sulfate side chains. This chain is Major prion protein (PRNP), found in Cervus elaphus (Red deer).